Consider the following 313-residue polypeptide: MKKQLIIGTRSSPLALWQAEFTKAELSRHYPELDITLKLVKTTGDVLLDSPLSKIGDMGLFTKDIEKHLIAKEIDLAVHSLKDVPTSTPEGLIITSFTEREDTRDVIISRSGETLLNLPQNARIATSSLRRMSQLLSMRPDFEICDIRGNLNTRFKKFDEGEFDAMMLAYAGVFRLKFSDRISEILPHDVMLPAVGQGALGIETRVDDEQTREIVRILNHSNTEYCCRAERALLRHLQGGCQIPIGAYASFKNGTLKLLAFVGSVNGKIGLRNEITKTGLVSPEQAEEAGIELAKELLKQGADEILSEIRKTR.

Cys241 carries the S-(dipyrrolylmethanemethyl)cysteine modification.

This sequence belongs to the HMBS family. In terms of assembly, monomer. Requires dipyrromethane as cofactor.

It catalyses the reaction 4 porphobilinogen + H2O = hydroxymethylbilane + 4 NH4(+). Its pathway is porphyrin-containing compound metabolism; protoporphyrin-IX biosynthesis; coproporphyrinogen-III from 5-aminolevulinate: step 2/4. It functions in the pathway porphyrin-containing compound metabolism; chlorophyll biosynthesis. Its function is as follows. Tetrapolymerization of the monopyrrole PBG into the hydroxymethylbilane pre-uroporphyrinogen in several discrete steps. The polypeptide is Porphobilinogen deaminase (Chlorobium phaeobacteroides (strain DSM 266 / SMG 266 / 2430)).